Here is a 101-residue protein sequence, read N- to C-terminus: Putative RNA-binding protein RbpA (101 aa).

One can recognise an RRM domain in the interval 2–79; that stretch reads SIYVGNLSYD…RDLKVNKAKP (78 aa). Residues 73-83 are compositionally biased toward basic and acidic residues; the sequence is KVNKAKPRENR. Residues 73-101 form a disordered region; sequence KVNKAKPRENRSGGGSFGGGRKSYGGSRY. Over residues 84-101 the composition is skewed to gly residues; the sequence is SGGGSFGGGRKSYGGSRY.

The sequence is that of Putative RNA-binding protein RbpA (rbpA) from Synechocystis sp. (strain ATCC 27184 / PCC 6803 / Kazusa).